We begin with the raw amino-acid sequence, 659 residues long: Putative oxidoreductase AegA (659 aa).

4Fe-4S ferredoxin-type domains are found at residues 3–22 (RFIM…EIAC), 47–77 (HQQQ…SHVD), 78–107 (DSIQ…IVLT), 114–147 (VKAT…LVTD), and 218–252 (DQAQ…WIEL). The [4Fe-4S] cluster site is built by Cys-12, Cys-15, Cys-18, Cys-22, Cys-56, Cys-59, Cys-64, Cys-68, Cys-87, Cys-90, Cys-93, Cys-97, Cys-121, Cys-124, Cys-133, Cys-137, Cys-227, Cys-230, Cys-236, and Cys-240.

[4Fe-4S] cluster is required as a cofactor.

In terms of biological role, involved in formate-dependent uric acid degradation under microaerobic and anaerobic conditions. May reduce the enzymes necessary for uric acid degradation. In Escherichia coli (strain K12), this protein is Putative oxidoreductase AegA.